A 237-amino-acid chain; its full sequence is uncharacterized protein (237 aa).

50–57 contacts ATP; that stretch reads APPGTGKS.

This is an uncharacterized protein from Escherichia coli (strain K12).